The primary structure comprises 718 residues: Fatty acid oxidation complex subunit alpha (718 aa).

The tract at residues 1 to 188 is enoyl-CoA hydratase/isomerase; sequence MIYQGESIRV…KVGAVDAVVE (188 aa). Residue aspartate 295 participates in substrate binding. The interval 310–718 is 3-hydroxyacyl-CoA dehydrogenase; it reads TKEIKTAGVL…KSYFDTTSAK (409 aa). NAD(+)-binding positions include methionine 324, aspartate 343, 400–402, lysine 407, and serine 429; that span reads VVE. The active-site For 3-hydroxyacyl-CoA dehydrogenase activity is histidine 450. Residue asparagine 453 coordinates NAD(+). Positions 500 and 658 each coordinate substrate.

It in the N-terminal section; belongs to the enoyl-CoA hydratase/isomerase family. The protein in the C-terminal section; belongs to the 3-hydroxyacyl-CoA dehydrogenase family. Heterotetramer of two alpha chains (FadB) and two beta chains (FadA).

It carries out the reaction a (3S)-3-hydroxyacyl-CoA + NAD(+) = a 3-oxoacyl-CoA + NADH + H(+). It catalyses the reaction a (3S)-3-hydroxyacyl-CoA = a (2E)-enoyl-CoA + H2O. The enzyme catalyses a 4-saturated-(3S)-3-hydroxyacyl-CoA = a (3E)-enoyl-CoA + H2O. The catalysed reaction is (3S)-3-hydroxybutanoyl-CoA = (3R)-3-hydroxybutanoyl-CoA. It carries out the reaction a (3Z)-enoyl-CoA = a 4-saturated (2E)-enoyl-CoA. It catalyses the reaction a (3E)-enoyl-CoA = a 4-saturated (2E)-enoyl-CoA. It participates in lipid metabolism; fatty acid beta-oxidation. In terms of biological role, involved in the aerobic and anaerobic degradation of long-chain fatty acids via beta-oxidation cycle. Catalyzes the formation of 3-oxoacyl-CoA from enoyl-CoA via L-3-hydroxyacyl-CoA. It can also use D-3-hydroxyacyl-CoA and cis-3-enoyl-CoA as substrate. The sequence is that of Fatty acid oxidation complex subunit alpha from Idiomarina loihiensis (strain ATCC BAA-735 / DSM 15497 / L2-TR).